The following is a 930-amino-acid chain: Translation initiation factor IF-2 (930 aa).

A compositionally biased stretch (low complexity) spans phenylalanine 50–valine 67. Disordered stretches follow at residues phenylalanine 50–glutamate 217 and glutamate 260–proline 346. Basic and acidic residues-rich tracts occupy residues serine 68–proline 90 and phenylalanine 110–arginine 125. Residues lysine 129–arginine 141 are compositionally biased toward low complexity. Composition is skewed to basic and acidic residues over residues arginine 157–lysine 167 and valine 262–arginine 295. Low complexity predominate over residues asparagine 309–asparagine 318. Over residues valine 337–proline 346 the composition is skewed to basic and acidic residues. Residues glutamate 432 to glutamate 599 form the tr-type G domain. The segment at glycine 441–threonine 448 is G1. Glycine 441 to threonine 448 is a GTP binding site. Residues glycine 466–histidine 470 form a G2 region. A G3 region spans residues aspartate 487–glycine 490. GTP is bound by residues aspartate 487–histidine 491 and asparagine 541–aspartate 544. Residues asparagine 541–aspartate 544 are G4. The segment at serine 577–lysine 579 is G5.

The protein belongs to the TRAFAC class translation factor GTPase superfamily. Classic translation factor GTPase family. IF-2 subfamily.

The protein resides in the cytoplasm. Functionally, one of the essential components for the initiation of protein synthesis. Protects formylmethionyl-tRNA from spontaneous hydrolysis and promotes its binding to the 30S ribosomal subunits. Also involved in the hydrolysis of GTP during the formation of the 70S ribosomal complex. This Streptococcus pneumoniae (strain ATCC 700669 / Spain 23F-1) protein is Translation initiation factor IF-2.